A 348-amino-acid polypeptide reads, in one-letter code: Protein pelota homolog (348 aa).

This sequence belongs to the eukaryotic release factor 1 family. Pelota subfamily. As to quaternary structure, monomer. It depends on a divalent metal cation as a cofactor.

The protein resides in the cytoplasm. May function in recognizing stalled ribosomes, interact with stem-loop structures in stalled mRNA molecules, and effect endonucleolytic cleavage of the mRNA. May play a role in the release non-functional ribosomes and degradation of damaged mRNAs. Has endoribonuclease activity. This chain is Protein pelota homolog, found in Methanococcus aeolicus (strain ATCC BAA-1280 / DSM 17508 / OCM 812 / Nankai-3).